A 276-amino-acid chain; its full sequence is Probable endonuclease 4 (276 aa).

Residues His-70, His-108, Glu-143, Asp-176, His-179, His-210, Asp-223, His-225, and Glu-255 each coordinate Zn(2+).

Belongs to the AP endonuclease 2 family. Zn(2+) is required as a cofactor.

The enzyme catalyses Endonucleolytic cleavage to 5'-phosphooligonucleotide end-products.. Functionally, endonuclease IV plays a role in DNA repair. It cleaves phosphodiester bonds at apurinic or apyrimidinic (AP) sites, generating a 3'-hydroxyl group and a 5'-terminal sugar phosphate. This Mesomycoplasma hyopneumoniae (strain 7448) (Mycoplasma hyopneumoniae) protein is Probable endonuclease 4.